Reading from the N-terminus, the 264-residue chain is Acyl-[acyl-carrier-protein]--UDP-N-acetylglucosamine O-acyltransferase (264 aa).

The protein belongs to the transferase hexapeptide repeat family. LpxA subfamily. In terms of assembly, homotrimer.

It is found in the cytoplasm. The enzyme catalyses a (3R)-hydroxyacyl-[ACP] + UDP-N-acetyl-alpha-D-glucosamine = a UDP-3-O-[(3R)-3-hydroxyacyl]-N-acetyl-alpha-D-glucosamine + holo-[ACP]. Its pathway is glycolipid biosynthesis; lipid IV(A) biosynthesis; lipid IV(A) from (3R)-3-hydroxytetradecanoyl-[acyl-carrier-protein] and UDP-N-acetyl-alpha-D-glucosamine: step 1/6. Involved in the biosynthesis of lipid A, a phosphorylated glycolipid that anchors the lipopolysaccharide to the outer membrane of the cell. The chain is Acyl-[acyl-carrier-protein]--UDP-N-acetylglucosamine O-acyltransferase from Leptothrix cholodnii (strain ATCC 51168 / LMG 8142 / SP-6) (Leptothrix discophora (strain SP-6)).